Consider the following 374-residue polypeptide: UPF0674 endoplasmic reticulum membrane protein C2G5.01 (374 aa).

The helical transmembrane segment at Phe-49 to Thr-68 threads the bilayer. Asn-287 carries N-linked (GlcNAc...) asparagine glycosylation. The interval Lys-335–Met-374 is disordered. Over residues Lys-349–Arg-363 the composition is skewed to basic and acidic residues. Positions Gln-364–Met-374 are enriched in basic residues.

The protein belongs to the UPF0674 family.

It localises to the endoplasmic reticulum membrane. This chain is UPF0674 endoplasmic reticulum membrane protein C2G5.01, found in Schizosaccharomyces pombe (strain 972 / ATCC 24843) (Fission yeast).